Consider the following 61-residue polypeptide: Photosystem II reaction center protein K (61 aa).

A propeptide spanning residues 1–24 (MPNILSLTCICFNSVIYPTSFFFA) is cleaved from the precursor. A helical membrane pass occupies residues 32–52 (IFNPIVDFMPVIPLFFFLLAF).

Belongs to the PsbK family. As to quaternary structure, PSII is composed of 1 copy each of membrane proteins PsbA, PsbB, PsbC, PsbD, PsbE, PsbF, PsbH, PsbI, PsbJ, PsbK, PsbL, PsbM, PsbT, PsbX, PsbY, PsbZ, Psb30/Ycf12, at least 3 peripheral proteins of the oxygen-evolving complex and a large number of cofactors. It forms dimeric complexes.

It localises to the plastid. Its subcellular location is the chloroplast thylakoid membrane. Functionally, one of the components of the core complex of photosystem II (PSII). PSII is a light-driven water:plastoquinone oxidoreductase that uses light energy to abstract electrons from H(2)O, generating O(2) and a proton gradient subsequently used for ATP formation. It consists of a core antenna complex that captures photons, and an electron transfer chain that converts photonic excitation into a charge separation. This chain is Photosystem II reaction center protein K, found in Triticum aestivum (Wheat).